Here is a 481-residue protein sequence, read N- to C-terminus: Ribosomal RNA small subunit methyltransferase F (481 aa).

S-adenosyl-L-methionine contacts are provided by residues 119-125, glutamate 143, aspartate 170, and aspartate 188; that span reads ASAPGSK. Cysteine 241 functions as the Nucleophile in the catalytic mechanism.

This sequence belongs to the class I-like SAM-binding methyltransferase superfamily. RsmB/NOP family.

It is found in the cytoplasm. It carries out the reaction cytidine(1407) in 16S rRNA + S-adenosyl-L-methionine = 5-methylcytidine(1407) in 16S rRNA + S-adenosyl-L-homocysteine + H(+). Functionally, specifically methylates the cytosine at position 1407 (m5C1407) of 16S rRNA. The polypeptide is Ribosomal RNA small subunit methyltransferase F (Shewanella sp. (strain MR-4)).